We begin with the raw amino-acid sequence, 287 residues long: Survival motor neuron protein (287 aa).

The disordered stretch occupies residues 1 to 27; sequence MGGGGGLPEPEDSVLFRRGTGQSDDSD. The interval 8–39 is P1 (binding site for GEMIN2); that stretch reads PEPEDSVLFRRGTGQSDDSDIWDDTALIKAYD. A Phosphothreonine modification is found at T20. Residues S23 and S26 each carry the phosphoserine modification. Residue K46 forms a Glycyl lysine isopeptide (Lys-Gly) (interchain with G-Cter in SUMO2) linkage. Positions 52–83 are disordered; it reads GDISEASDKPKSTPKRKPAKKNKSQKKNATTA. Residues 63 to 77 show a composition bias toward basic residues; sequence STPKRKPAKKNKSQK. Position 64 is a phosphothreonine (T64). Residues 86 to 146 enclose the Tudor domain; sequence QWKVGDKCSA…LSPACEVANN (61 aa). The segment at 92 to 205 is required for interaction with RPP20/POP7; it reads KCSAVWSEDG…MSGSGLGPGK (114 aa). Residues 148–216 form a disordered region; that stretch reads EQDTQENENE…GVKFSGPPPP (69 aa). Over residues 157 to 180 the composition is skewed to polar residues; it reads ESQISTDESENSSRSPGNKPNNIK. Residue K205 forms a Glycyl lysine isopeptide (Lys-Gly) (interchain with G-Cter in SUMO2) linkage. The tract at residues 234 to 261 is P2 (binding site for SM B); that stretch reads PPIIPPPPPICPDSLDDADALGSMLISW. A required for interaction with SYNCRIP region spans residues 273–287; sequence GFKQNQKEGRCSHFN.

This sequence belongs to the SMN family. Homooligomer; may form higher order homooligomers in the dimer to octamer range. Part of the core SMN complex that contains SMN1, GEMIN2/SIP1, DDX20/GEMIN3, GEMIN4, GEMIN5, GEMIN6, GEMIN7, GEMIN8 and STRAP/UNRIP. Part of the SMN-Sm complex that contains SMN1, GEMIN2/SIP1, DDX20/GEMIN3, GEMIN4, GEMIN5, GEMIN6, GEMIN7, GEMIN8, STRAP/UNRIP and the Sm proteins SNRPB, SNRPD1, SNRPD2, SNRPD3, SNRPE, SNRPF and SNRPG. Component of an import snRNP complex composed of KPNB1, RNUT1, SMN1 and ZNF259. Interacts with DDX20, FBL, NOLA1, RNUT1, SYNCRIP and with several spliceosomal snRNP core Sm proteins, including SNRPB, SNRPD1, SNRPD2, SNRPD3, SNRPE and ILF3. Interacts with GEMIN2; the interaction is direct. Interacts with GEMIN3; the interaction is direct. Interacts with GEMIN8; the interaction is direct. Interacts with SNRPB; the interaction is direct. Interacts (via Tudor domain) with SNRPD1 (via C-terminus); the interaction is direct. Interacts with SNRPD2; the interaction is direct. Interacts (via Tudor domain) with SNRPD3 (via C-terminus); the interaction is direct. Interacts with SNRPE; the interaction is direct. Interacts with OSTF1, LSM10, LSM11 and RPP20/POP7. Interacts (via C-terminal region) with ZPR1 (via C-terminal region). Interacts (via Tudor domain) with COIL. Interacts with SETX; recruits SETX to POLR2A. Interacts with POLR2A (via the C-terminal domain (CTD)). Interacts with PRMT5. Interacts with XRN2. Interacts (via C-terminus) with FMR1 (via C-terminus); the interaction is direct and occurs in a RNA-independent manner. Interacts (via Tudor domain) with SF3B2 ('Arg-508'-methylated form). Interacts with WRAP53/TCAB1. Interacts (via Tudor domain) with ELAVL4 in an RNA-independent manner; the interaction is required for localization of ELAVL4 to RNA granules. Interacts with FRG1.

The protein resides in the nucleus. The protein localises to the gem. It is found in the cajal body. It localises to the cytoplasm. Its subcellular location is the cytoplasmic granule. The protein resides in the perikaryon. The protein localises to the cell projection. It is found in the neuron projection. It localises to the axon. Its subcellular location is the myofibril. The protein resides in the sarcomere. The protein localises to the z line. Functionally, the SMN complex catalyzes the assembly of small nuclear ribonucleoproteins (snRNPs), the building blocks of the spliceosome, and thereby plays an important role in the splicing of cellular pre-mRNAs. Most spliceosomal snRNPs contain a common set of Sm proteins SNRPB, SNRPD1, SNRPD2, SNRPD3, SNRPE, SNRPF and SNRPG that assemble in a heptameric protein ring on the Sm site of the small nuclear RNA to form the core snRNP (Sm core). In the cytosol, the Sm proteins SNRPD1, SNRPD2, SNRPE, SNRPF and SNRPG are trapped in an inactive 6S pICln-Sm complex by the chaperone CLNS1A that controls the assembly of the core snRNP. To assemble core snRNPs, the SMN complex accepts the trapped 5Sm proteins from CLNS1A forming an intermediate. Binding of snRNA inside 5Sm ultimately triggers eviction of the SMN complex, thereby allowing binding of SNRPD3 and SNRPB to complete assembly of the core snRNP. Within the SMN complex, SMN1 acts as a structural backbone and together with GEMIN2 it gathers the Sm complex subunits. Ensures the correct splicing of U12 intron-containing genes that may be important for normal motor and proprioceptive neurons development. Also required for resolving RNA-DNA hybrids created by RNA polymerase II, that form R-loop in transcription terminal regions, an important step in proper transcription termination. May also play a role in the metabolism of small nucleolar ribonucleoprotein (snoRNPs). The polypeptide is Survival motor neuron protein (SMN1) (Canis lupus familiaris (Dog)).